The sequence spans 865 residues: cGMP-specific 3',5'-cyclic phosphodiesterase (865 aa).

A Phosphoserine modification is found at Ser92. GAF domains are found at residues 154–304 and 336–493; these read DVTA…GIVL and SLEV…GLGI. The region spanning 526 to 850 is the PDEase domain; it reads ETRELQSLAA…QKWQALAEQQ (325 aa). The active-site Proton donor is the His603. The Zn(2+) site is built by His607, His643, Asp644, and Asp754. Asp644 serves as a coordination point for Mg(2+). Gln807 is a 3',5'-cyclic GMP binding site.

The protein belongs to the cyclic nucleotide phosphodiesterase family. It depends on Zn(2+) as a cofactor. Mg(2+) is required as a cofactor. Phosphorylation is regulated by binding of cGMP to the two allosteric sites. Phosphorylation by PRKG1 leads to its activation.

It carries out the reaction 3',5'-cyclic GMP + H2O = GMP + H(+). Its pathway is purine metabolism; 3',5'-cyclic GMP degradation; GMP from 3',5'-cyclic GMP: step 1/1. Most potently inhibited by zaprinast and dipyridamole. In terms of biological role, plays a role in signal transduction by regulating the intracellular concentration of cyclic nucleotides. This phosphodiesterase catalyzes the specific hydrolysis of cGMP to 5'-GMP. Specifically regulates nitric-oxide-generated cGMP. This Bos taurus (Bovine) protein is cGMP-specific 3',5'-cyclic phosphodiesterase (PDE5A).